A 23-amino-acid polypeptide reads, in one-letter code: Potassium channel toxin alpha-KTx 13.1 (23 aa).

3 disulfide bridges follow: Cys-2–Cys-15, Cys-5–Cys-20, and Cys-9–Cys-22. The interval 13–20 (GKCINGRC) is interaction with Ca(2+)-activated K(+) channels.

In terms of tissue distribution, expressed by the venom gland.

The protein localises to the secreted. Functionally, blocks reversibly Shaker B potassium channels. Also displaces binding of noxiustoxin to mouse brain synaptosome membranes. The chain is Potassium channel toxin alpha-KTx 13.1 from Tityus obscurus (Amazonian scorpion).